A 474-amino-acid chain; its full sequence is PRAME family member 13 (474 aa).

An LRR 1; degenerate repeat occupies 97–124 (RRKLQVLDLRDVDENFWARWPGAWALSC). One copy of the LRR 2; degenerate repeat lies at 179 to 203 (HLCCSKLVNYLTPIKHLRKSLKIIY). Residues 204–230 (LNSIQELEIHNMSWPRLIRKLRCYLKE) form an LRR 3; degenerate repeat. One copy of the LRR 4; degenerate repeat lies at 231-265 (MKTLGKLVFSRCHHSTSDNELEGRLVTKFSSVFLG). LRR repeat units follow at residues 266-291 (LEHL…IRCL), 292-323 (QNPL…GYLK), 324-342 (HLNL…PLGA), 348-375 (AASL…GLSR), and 376-400 (CSQL…LLRH).

Belongs to the PRAME family.

The chain is PRAME family member 13 from Homo sapiens (Human).